A 244-amino-acid chain; its full sequence is Mediator of RNA polymerase II transcription subunit 19 (244 aa).

Disordered stretches follow at residues 1–56 (MENF…PGAD) and 171–244 (PKKK…SSLR). A compositionally biased stretch (pro residues) spans 26 to 47 (GKPPPPPPPPAGGGPGTAPPPT). Over residues 171 to 182 (PKKKNKHKHKQS) the composition is skewed to basic residues. The residue at position 194 (Ser-194) is a Phosphoserine. Positions 212-224 (KRKKKEKKKKKNR) are enriched in basic residues. Position 226 is a phosphoserine (Ser-226). Low complexity predominate over residues 234–244 (SSQASSSSSLR).

It belongs to the Mediator complex subunit 19 family. As to quaternary structure, component of the Mediator complex, which is composed of MED1, MED4, MED6, MED7, MED8, MED9, MED10, MED11, MED12, MED13, MED13L, MED14, MED15, MED16, MED17, MED18, MED19, MED20, MED21, MED22, MED23, MED24, MED25, MED26, MED27, MED29, MED30, MED31, CCNC, CDK8 and CDC2L6/CDK11. The MED12, MED13, CCNC and CDK8 subunits form a distinct module termed the CDK8 module. Mediator containing the CDK8 module is less active than Mediator lacking this module in supporting transcriptional activation. Individual preparations of the Mediator complex lacking one or more distinct subunits have been variously termed ARC, CRSP, DRIP, PC2, SMCC and TRAP.

It is found in the nucleus. In terms of biological role, component of the Mediator complex, a coactivator involved in the regulated transcription of nearly all RNA polymerase II-dependent genes. Mediator functions as a bridge to convey information from gene-specific regulatory proteins to the basal RNA polymerase II transcription machinery. Mediator is recruited to promoters by direct interactions with regulatory proteins and serves as a scaffold for the assembly of a functional preinitiation complex with RNA polymerase II and the general transcription factors. This Homo sapiens (Human) protein is Mediator of RNA polymerase II transcription subunit 19 (MED19).